Reading from the N-terminus, the 391-residue chain is MASSSTFLELTPFQWNQPLPYTQRPHHRTVLLYSKPQRRSNSIRLQISVKYKQSTSSSDPDLRSNFNPFEQIAIQVKKALDSLKKPAIAAVLLGLLLFYDPNSALAASGGRIGGNSFSSRSRSSSSSSSQSYSVPRTSNPSFSYSARTAPYYGPSPFGGGFVGPAVGFGFGGFSSFSLILVGFAAFVLVSGFLSDRSQDDSILTDTQKTSVIKLQVGLLGLGRTLQQDFNRLAESSDTSTPEGLSYVLTEATLALLRHPDYCISCYSSVDVKPSIEKGEKRFNQLSIEERGKFDEETLVNVNSIKRQSSKIRKASGFSNEYIVVTILMAAEGIHKLPPINGTTDLKEALLKLGSIPRNKIMAVEVLWTPQNEADALSERELLEDYPLLRPL.

Residues 1-48 (MASSSTFLELTPFQWNQPLPYTQRPHHRTVLLYSKPQRRSNSIRLQIS) constitute a chloroplast transit peptide. The helical transmembrane segment at 87-107 (AIAAVLLGLLLFYDPNSALAA) threads the bilayer. Residues 116–138 (SFSSRSRSSSSSSSQSYSVPRTS) are compositionally biased toward low complexity. Residues 116 to 140 (SFSSRSRSSSSSSSQSYSVPRTSNP) are disordered. 2 helical membrane passes run 168–188 (FGFG…AFVL) and 321–341 (YIVV…PING).

It belongs to the FLAP family.

The protein resides in the plastid. It localises to the chloroplast thylakoid membrane. The protein localises to the chloroplast membrane. Its subcellular location is the chloroplast envelope. Its function is as follows. Monitors proton H(+) homeostasis in chloroplasts to manipulate luminal acidification levels appropriately to balance photoprotection and photochemical processes. Required during acclimation response to fluctuating light (e.g. photosynthetic activity optimization) by controlling non-photochemical quenching (NPQ); acts independently from DLDG1. In Arabidopsis thaliana (Mouse-ear cress), this protein is FLUCTUATING-LIGHT-ACCLIMATION protein 1, chloroplastic.